The primary structure comprises 252 residues: 2-succinyl-6-hydroxy-2,4-cyclohexadiene-1-carboxylate synthase (252 aa).

The protein belongs to the AB hydrolase superfamily. MenH family. Monomer.

It catalyses the reaction 5-enolpyruvoyl-6-hydroxy-2-succinyl-cyclohex-3-ene-1-carboxylate = (1R,6R)-6-hydroxy-2-succinyl-cyclohexa-2,4-diene-1-carboxylate + pyruvate. Its pathway is quinol/quinone metabolism; 1,4-dihydroxy-2-naphthoate biosynthesis; 1,4-dihydroxy-2-naphthoate from chorismate: step 3/7. It participates in quinol/quinone metabolism; menaquinone biosynthesis. Catalyzes a proton abstraction reaction that results in 2,5-elimination of pyruvate from 2-succinyl-5-enolpyruvyl-6-hydroxy-3-cyclohexene-1-carboxylate (SEPHCHC) and the formation of 2-succinyl-6-hydroxy-2,4-cyclohexadiene-1-carboxylate (SHCHC). This is 2-succinyl-6-hydroxy-2,4-cyclohexadiene-1-carboxylate synthase from Escherichia coli (strain K12 / MC4100 / BW2952).